The following is a 203-amino-acid chain: MAANPGNKIRNAKLVLLGDVGTGKSSLVLRFVKGQFVEFQESTIGAAFFSQTLAVNDETVKFEIWDTAGQERYHSLAPMYYRGAAAAIVVYDITNAASFTRAKKWVQELQAQGNPNTIMALAGNKADMVEARQVPAEEAKTYAQENGLFFMETSAKTAINVNDVFHEIAKRLLQGQQAQDTPAGMVLNQRPAERMVSSSSCCS.

18-26 lines the GTP pocket; that stretch reads GDVGTGKSS. An Effector region motif is present at residues 40 to 48; it reads QESTIGAAF. GTP-binding positions include 66–70, 124–127, and 154–155; these read DTAGQ, NKAD, and SA. 2 S-geranylgeranyl cysteine lipidation sites follow: Cys201 and Cys202.

Belongs to the small GTPase superfamily. Rab family. Interacts with VPS9A. Interacts with NSF and RBP-L. In terms of tissue distribution, highly expressed in roots. Expressed at low levels in shoots, flowers and grains.

Its subcellular location is the prevacuolar compartment membrane. It is found in the golgi apparatus membrane. The protein resides in the cell membrane. It localises to the protein storage vacuole membrane. Its function is as follows. Plays an important role in intracellular trafficking of seed storage proteins to the protein storage vacuoles (PSVs). Participates in the transport of the proglutelins from the Golgi apparatus to the PSVs in endosperm. Functions cooperatively with VPS9A to regulate post-Golgi dense vesicle-mediated transport of storage proteins to the type II protein bodies (PBII) protein storage vacuoles in developing endosperm. Involved in the maintenance of the general structural organization of the endomembrane system in developing endosperm. Binds GTP in vitro. Forms a quaternary complex with the two glutelin zipcode RNA-binding proteins RBP-L and RBP-P, and the membrane trafficking factor NSF. This quaternay complex carries glutelin mRNAs for active transport on endosomes to the cortical endoplasmic reticulum membrane, and enables endosome-mediated glutelin mRNA transport in endosperm cells. The protein is Ras-related protein Rab5A of Oryza sativa subsp. japonica (Rice).